Here is a 350-residue protein sequence, read N- to C-terminus: MSESLQSVLIIGGSGFLGLHLIEQFYRHCPNVAITVFDVRPLPEKLSKYFTFDPSKIQFFKGDLTSDKDVSDAINQSKCDVIVHSASPMHGLPQEIYEKVNVQGTKNLLSVAQKLHVKALVYTSSAGVIFNGQDVINADETWPYPEVHMDGYNETKAAAEEAVMKANDNDQLRTVCLRPAGIFGPGDRQLVPGLRASAKLGQSKYQLGDNNNLFDWTYVGNVADAHVLAAQKILDKSTRDDISGQTFFITNDSPTYFWTLARTVWKNDGYIDKYYIKLPYPVALTLGYISEFVAKNILKKEPGITPFRVKVVCAIRYHNIAKAKKLLGYKPEVDLETGINYTLDWMNEDL.

Residues 12–18 (GGSGFLG), 63–64 (DL), and 85–87 (SAS) each bind NADP(+). 2 residues coordinate substrate: serine 125 and tyrosine 152. Residues tyrosine 152, lysine 156, and 179–182 (PAGI) contribute to the NADP(+) site. The active-site Proton donor is lysine 156.

It belongs to the 3-beta-HSD family. As to quaternary structure, heterotetramer of ERG25, ERG26, ERG27 and ERG28. ERG28 acts as a scaffold to tether ERG27 and other 4,4-demethylation-related enzymes, forming a demethylation enzyme complex, in the endoplasmic reticulum.

The protein resides in the endoplasmic reticulum membrane. It catalyses the reaction 4beta-methylzymosterol-4alpha-carboxylate + NADP(+) = 3-dehydro-4-methylzymosterol + CO2 + NADPH. Its pathway is steroid biosynthesis; zymosterol biosynthesis; zymosterol from lanosterol: step 4/6. Sterol-4-alpha-carboxylate 3-dehydrogenase; part of the third module of ergosterol biosynthesis pathway that includes the late steps of the pathway. ERG26 is a catalytic component of the C-4 demethylation complex that catalyzes the oxidative decarboxylation that results in a reduction of the 3-beta-hydroxy group at the C-3 carbon to an oxo group. The third module or late pathway involves the ergosterol synthesis itself through consecutive reactions that mainly occur in the endoplasmic reticulum (ER) membrane. Firstly, the squalene synthase ERG9 catalyzes the condensation of 2 farnesyl pyrophosphate moieties to form squalene, which is the precursor of all steroids. Squalene synthase is crucial for balancing the incorporation of farnesyl diphosphate (FPP) into sterol and nonsterol isoprene synthesis. Secondly, the squalene epoxidase ERG1 catalyzes the stereospecific oxidation of squalene to (S)-2,3-epoxysqualene, which is considered to be a rate-limiting enzyme in steroid biosynthesis. Then, the lanosterol synthase ERG7 catalyzes the cyclization of (S)-2,3 oxidosqualene to lanosterol, a reaction that forms the sterol core. In the next steps, lanosterol is transformed to zymosterol through a complex process involving various demethylation, reduction and desaturation reactions. The lanosterol 14-alpha-demethylase ERG11 (also known as CYP51) catalyzes C14-demethylation of lanosterol to produce 4,4'-dimethyl cholesta-8,14,24-triene-3-beta-ol, which is critical for ergosterol biosynthesis. The C-14 reductase ERG24 reduces the C14=C15 double bond of 4,4-dimethyl-cholesta-8,14,24-trienol to produce 4,4-dimethyl-cholesta-8,24-dienol. 4,4-dimethyl-cholesta-8,24-dienol is substrate of the C-4 demethylation complex ERG25-ERG26-ERG27 in which ERG25 catalyzes the three-step monooxygenation required for the demethylation of 4,4-dimethyl and 4alpha-methylsterols, ERG26 catalyzes the oxidative decarboxylation that results in a reduction of the 3-beta-hydroxy group at the C-3 carbon to an oxo group, and ERG27 is responsible for the reduction of the keto group on the C-3. ERG28 has a role as a scaffold to help anchor ERG25, ERG26 and ERG27 to the endoplasmic reticulum and ERG29 regulates the activity of the iron-containing C4-methylsterol oxidase ERG25. Then, the sterol 24-C-methyltransferase ERG6 catalyzes the methyl transfer from S-adenosyl-methionine to the C-24 of zymosterol to form fecosterol. The C-8 sterol isomerase ERG2 catalyzes the reaction which results in unsaturation at C-7 in the B ring of sterols and thus converts fecosterol to episterol. The sterol-C5-desaturase ERG3 then catalyzes the introduction of a C-5 double bond in the B ring to produce 5-dehydroepisterol. The C-22 sterol desaturase ERG5 further converts 5-dehydroepisterol into ergosta-5,7,22,24(28)-tetraen-3beta-ol by forming the C-22(23) double bond in the sterol side chain. Finally, ergosta-5,7,22,24(28)-tetraen-3beta-ol is substrate of the C-24(28) sterol reductase ERG4 to produce ergosterol. This Candida albicans (strain SC5314 / ATCC MYA-2876) (Yeast) protein is Sterol-4-alpha-carboxylate 3-dehydrogenase ERG26, decarboxylating.